Reading from the N-terminus, the 329-residue chain is 4-hydroxythreonine-4-phosphate dehydrogenase (329 aa).

Substrate is bound by residues H136 and T137. A divalent metal cation-binding residues include H166, H211, and H266. The substrate site is built by K274, N283, and R292.

The protein belongs to the PdxA family. Homodimer. The cofactor is Zn(2+). Requires Mg(2+) as cofactor. It depends on Co(2+) as a cofactor.

It localises to the cytoplasm. It catalyses the reaction 4-(phosphooxy)-L-threonine + NAD(+) = 3-amino-2-oxopropyl phosphate + CO2 + NADH. The protein operates within cofactor biosynthesis; pyridoxine 5'-phosphate biosynthesis; pyridoxine 5'-phosphate from D-erythrose 4-phosphate: step 4/5. Its function is as follows. Catalyzes the NAD(P)-dependent oxidation of 4-(phosphooxy)-L-threonine (HTP) into 2-amino-3-oxo-4-(phosphooxy)butyric acid which spontaneously decarboxylates to form 3-amino-2-oxopropyl phosphate (AHAP). The chain is 4-hydroxythreonine-4-phosphate dehydrogenase from Shigella boydii serotype 4 (strain Sb227).